Consider the following 149-residue polypeptide: Large ribosomal subunit protein uL13 (149 aa).

Belongs to the universal ribosomal protein uL13 family. As to quaternary structure, part of the 50S ribosomal subunit.

This protein is one of the early assembly proteins of the 50S ribosomal subunit, although it is not seen to bind rRNA by itself. It is important during the early stages of 50S assembly. In Chlorobium phaeobacteroides (strain DSM 266 / SMG 266 / 2430), this protein is Large ribosomal subunit protein uL13.